The following is a 406-amino-acid chain: DNA repair protein RAD55 (406 aa).

43-50 (GPPGIGKT) is an ATP binding site. Residues 385 to 406 (DSNDNPLPNAEGKEEIIYDSEG) form a disordered region.

This sequence belongs to the RecA family. RAD55 subfamily.

The protein localises to the nucleus. Its function is as follows. Required for radiation resistance and meiotic viability and presumably acts in recombination and recombinational DNA repair pathways. The sequence is that of DNA repair protein RAD55 (RAD55) from Saccharomyces cerevisiae (strain ATCC 204508 / S288c) (Baker's yeast).